The sequence spans 151 residues: Probable cGMP 3',5'-cyclic phosphodiesterase subunit delta (151 aa).

The protein belongs to the PDE6D/unc-119 family. As to quaternary structure, interacts with Pde6.

The protein resides in the nucleus. It localises to the cytoplasm. The protein is Probable cGMP 3',5'-cyclic phosphodiesterase subunit delta of Aedes aegypti (Yellowfever mosquito).